Here is a 284-residue protein sequence, read N- to C-terminus: Nucleotide-binding protein Teth39_0666 (284 aa).

Residue 8–15 (GLSGAGKT) coordinates ATP. 58–61 (DLRG) lines the GTP pocket.

This sequence belongs to the RapZ-like family.

In terms of biological role, displays ATPase and GTPase activities. The sequence is that of Nucleotide-binding protein Teth39_0666 from Thermoanaerobacter pseudethanolicus (strain ATCC 33223 / 39E) (Clostridium thermohydrosulfuricum).